The primary structure comprises 177 residues: MSREIEPLIVGRVIGDVLEMFNPSVTMRVTFNSNTIVSNGHELAPSLLLSKPRVEIGGQDLRSFFTLIMMDPDAPSPSNPYMREYLHWMVTDIPGTTDASFGREIVRYETPKPVAGIHRYVFALFKQRGRQAVKAAPETRECFNTNAFSSYFGLSQPVAAVYFNAQRETAPRRRPSY.

The protein belongs to the phosphatidylethanolamine-binding protein family.

It is found in the cytoplasm. May form complexes with phosphorylated ligands by interfering with kinases and their effectors. This is Protein BROTHER of FT and TFL 1 (BFT) from Arabidopsis thaliana (Mouse-ear cress).